Reading from the N-terminus, the 353-residue chain is UPF0283 membrane protein YPTS_2342 (353 aa).

Helical transmembrane passes span 71 to 91, 101 to 121, and 214 to 234; these read MVTAGMVILGASVIAQSVQWV, IALGATTAGGLIILAGVGSVV, and ESALMIAVSPLALVDMAFIAW.

It belongs to the UPF0283 family.

The protein resides in the cell inner membrane. This is UPF0283 membrane protein YPTS_2342 from Yersinia pseudotuberculosis serotype IB (strain PB1/+).